The sequence spans 412 residues: 23S rRNA (uracil(747)-C(5))-methyltransferase (412 aa).

Residues Cys63, Cys69, Cys72, and Cys139 each coordinate [4Fe-4S] cluster. S-adenosyl-L-methionine-binding residues include Gln255, Tyr281, Glu302, and Asp343. Residue Cys369 is the Nucleophile of the active site.

Belongs to the class I-like SAM-binding methyltransferase superfamily. RNA M5U methyltransferase family.

It catalyses the reaction uridine(747) in 23S rRNA + S-adenosyl-L-methionine = 5-methyluridine(747) in 23S rRNA + S-adenosyl-L-homocysteine + H(+). Its function is as follows. Catalyzes the formation of 5-methyl-uridine at position equivalent to 747 (m5U747) in 23S rRNA. This Pyrococcus horikoshii (strain ATCC 700860 / DSM 12428 / JCM 9974 / NBRC 100139 / OT-3) protein is 23S rRNA (uracil(747)-C(5))-methyltransferase.